The following is a 374-amino-acid chain: Probable tRNA pseudouridine synthase D (374 aa).

The active-site Nucleophile is the Asp81. Residues Val141–Leu340 form the TRUD domain.

Belongs to the pseudouridine synthase TruD family.

The catalysed reaction is uridine(13) in tRNA = pseudouridine(13) in tRNA. Functionally, could be responsible for synthesis of pseudouridine from uracil-13 in transfer RNAs. This is Probable tRNA pseudouridine synthase D from Nanoarchaeum equitans (strain Kin4-M).